The following is a 172-amino-acid chain: RNA pyrophosphohydrolase (172 aa).

Residues 6–149 (GYRLNVGIVI…KRDVYRRAMK (144 aa)) form the Nudix hydrolase domain. Positions 38 to 59 (GGIDEGETPEQAMYRELYEEVG) match the Nudix box motif.

This sequence belongs to the Nudix hydrolase family. RppH subfamily. The cofactor is a divalent metal cation.

Its function is as follows. Accelerates the degradation of transcripts by removing pyrophosphate from the 5'-end of triphosphorylated RNA, leading to a more labile monophosphorylated state that can stimulate subsequent ribonuclease cleavage. The chain is RNA pyrophosphohydrolase from Vibrio atlanticus (strain LGP32) (Vibrio splendidus (strain Mel32)).